Consider the following 328-residue polypeptide: Nickel import system permease protein NikB (328 aa).

6 helical membrane passes run 11–31, 104–124, 139–159, 170–190, 229–249, and 279–299; these read LIQMIVVLFVISTLAFILMKL, LLISFSTLVVSLCISIPLGII, VISTLSISLPAFFIGIILLFI, ILSQFILPVLTLSLGMCAYII, ILPIIPLLGISLGSLIGGTVV, and VLFIGFFVVIINTIADLLTLL. The region spanning 100 to 297 is the ABC transmembrane type-1 domain; the sequence is APITLLISFS…IINTIADLLT (198 aa).

It belongs to the binding-protein-dependent transport system permease family. OppBC subfamily. The complex is composed of two ATP-binding proteins (NikD and NikE), two transmembrane proteins (NikB and NikC) and a solute-binding protein (NikA).

It localises to the cell membrane. Functionally, part of the ABC transporter complex NikABCDE (Opp2) involved in nickel import. Probably responsible for the translocation of the substrate across the membrane. This chain is Nickel import system permease protein NikB, found in Staphylococcus aureus (strain MRSA252).